A 374-amino-acid chain; its full sequence is Flagellar P-ring protein 1 (374 aa).

The N-terminal stretch at 1–29 is a signal peptide; it reads MPGVRWVRIVGVACAALSALALSVTSASA.

Belongs to the FlgI family. The basal body constitutes a major portion of the flagellar organelle and consists of four rings (L,P,S, and M) mounted on a central rod.

The protein localises to the periplasm. The protein resides in the bacterial flagellum basal body. Functionally, assembles around the rod to form the L-ring and probably protects the motor/basal body from shearing forces during rotation. The protein is Flagellar P-ring protein 1 of Bradyrhizobium diazoefficiens (strain JCM 10833 / BCRC 13528 / IAM 13628 / NBRC 14792 / USDA 110).